The sequence spans 66 residues: Large ribosomal subunit protein bL35 (66 aa).

Positions Met1–His26 are enriched in basic residues. The tract at residues Met1–Thr29 is disordered.

This sequence belongs to the bacterial ribosomal protein bL35 family.

The polypeptide is Large ribosomal subunit protein bL35 (Geobacillus kaustophilus (strain HTA426)).